The sequence spans 458 residues: Phosphoglucosamine mutase (458 aa).

Residue Ser100 is the Phosphoserine intermediate of the active site. Positions 100, 254, 256, and 258 each coordinate Mg(2+). Ser100 carries the post-translational modification Phosphoserine.

Belongs to the phosphohexose mutase family. It depends on Mg(2+) as a cofactor. Post-translationally, activated by phosphorylation.

It carries out the reaction alpha-D-glucosamine 1-phosphate = D-glucosamine 6-phosphate. Catalyzes the conversion of glucosamine-6-phosphate to glucosamine-1-phosphate. This is Phosphoglucosamine mutase from Nocardia farcinica (strain IFM 10152).